Reading from the N-terminus, the 230-residue chain is Porin OmpL (230 aa).

The signal sequence occupies residues 1-20 (MKSLNTLVILTSVISTSVFA).

Belongs to the oligogalacturonate-specific porin KdgM (TC 1.B.35) family. OmpL subfamily.

Its subcellular location is the cell outer membrane. Functionally, outer membrane channel protein that allows an efficient diffusion of low-molecular-weight solutes such as small sugars and tetraglycine. However, the specific substrate recognized by the OmpL channel is unknown. The sequence is that of Porin OmpL (ompL) from Salmonella paratyphi A (strain ATCC 9150 / SARB42).